The following is a 134-amino-acid chain: Endoribonuclease YbeY (134 aa).

Zn(2+)-binding residues include histidine 94, histidine 98, and histidine 104.

This sequence belongs to the endoribonuclease YbeY family. Zn(2+) serves as cofactor.

It is found in the cytoplasm. Functionally, single strand-specific metallo-endoribonuclease involved in late-stage 70S ribosome quality control and in maturation of the 3' terminus of the 16S rRNA. This chain is Endoribonuclease YbeY, found in Campylobacter fetus subsp. fetus (strain 82-40).